Reading from the N-terminus, the 319-residue chain is Tetrahydromethanopterin S-methyltransferase subunit H (319 aa).

The protein belongs to the MtrH family. The complex is composed of 8 subunits; MtrA, MtrB, MtrC, MtrD, MtrE, MtrF, MtrG and MtrH.

The catalysed reaction is 5-methyl-5,6,7,8-tetrahydromethanopterin + coenzyme M + 2 Na(+)(in) = 5,6,7,8-tetrahydromethanopterin + methyl-coenzyme M + 2 Na(+)(out). The protein operates within one-carbon metabolism; methanogenesis from CO(2); methyl-coenzyme M from 5,10-methylene-5,6,7,8-tetrahydromethanopterin: step 2/2. In terms of biological role, part of a complex that catalyzes the formation of methyl-coenzyme M and tetrahydromethanopterin from coenzyme M and methyl-tetrahydromethanopterin. This is an energy-conserving, sodium-ion translocating step. MtrH catalyzes the transfer of the methyl group from methyl-tetrahydromethanopterin to the corrinoid prosthetic group of MtrA. The polypeptide is Tetrahydromethanopterin S-methyltransferase subunit H (Methanococcus maripaludis (strain C5 / ATCC BAA-1333)).